Here is a 366-residue protein sequence, read N- to C-terminus: Tetraacyldisaccharide 4'-kinase (366 aa).

62–69 (RVGGTGKT) is an ATP binding site.

Belongs to the LpxK family.

It catalyses the reaction a lipid A disaccharide + ATP = a lipid IVA + ADP + H(+). Its pathway is glycolipid biosynthesis; lipid IV(A) biosynthesis; lipid IV(A) from (3R)-3-hydroxytetradecanoyl-[acyl-carrier-protein] and UDP-N-acetyl-alpha-D-glucosamine: step 6/6. Transfers the gamma-phosphate of ATP to the 4'-position of a tetraacyldisaccharide 1-phosphate intermediate (termed DS-1-P) to form tetraacyldisaccharide 1,4'-bis-phosphate (lipid IVA). The chain is Tetraacyldisaccharide 4'-kinase from Polynucleobacter necessarius subsp. necessarius (strain STIR1).